A 202-amino-acid polypeptide reads, in one-letter code: Coiled-coil domain-containing protein 85B (202 aa).

Methionine 1 is modified (N-acetylmethionine). Coiled coils occupy residues 44–82 and 118–141; these read RLMQ…DLCC and QKLA…KELC. The segment covering 152 to 162 has biased composition (gly residues); it reads GGPGGAVGSGA. The tract at residues 152–202 is disordered; that stretch reads GGPGGAVGSGAGPTPELALPPCGPRDLGDGSSSTGSVGSPDQLPLACSPDD. The span at 180 to 190 shows a compositional bias: low complexity; sequence DGSSSTGSVGS.

This sequence belongs to the CCDC85 family. As to quaternary structure, interacts with CEBPB. May interact with CEBPD. Interacts with EURL. Interacts with MCRS1. Interacts with TCF7L2; competes with CTNNB1. Interacts with ANKRD26. Interacts with the beta-catenin family proteins ARVCF, CTNND1, CTNND2 and PKP4. As to expression, expressed in white and brown adipose tissue.

Its subcellular location is the nucleus. It localises to the cytoplasm. The protein localises to the cytoskeleton. The protein resides in the microtubule organizing center. It is found in the centrosome. Its subcellular location is the cell junction. It localises to the adherens junction. Functions as a transcriptional repressor. May inhibit the activity of CTNNB1 in a TP53-dependent manner and thus regulate cell growth. May function in adipocyte differentiation, negatively regulating mitotic clonal expansion. Plays a role in cell-cell adhesion and epithelium development through its interaction with proteins of the beta-catenin family. This chain is Coiled-coil domain-containing protein 85B (Ccdc85b), found in Mus musculus (Mouse).